We begin with the raw amino-acid sequence, 492 residues long: Probable cytochrome P450 313a1 (492 aa).

Heme is bound at residue Cys438.

The protein belongs to the cytochrome P450 family. Requires heme as cofactor.

It is found in the endoplasmic reticulum membrane. The protein localises to the microsome membrane. May be involved in the metabolism of insect hormones and in the breakdown of synthetic insecticides. The chain is Probable cytochrome P450 313a1 (Cyp313a1) from Drosophila melanogaster (Fruit fly).